We begin with the raw amino-acid sequence, 200 residues long: MSTISFTIFILANVWLLVVTTSIAQFVIDTSGEPVENDEDYFIRPAITGNGGSLTLVTRNSCPFNVGLDPDAPQGFAVLLSPFVSNREEDEVRLGRDLRVIFQAGTSCGQSTEWRLGERDATTGRRFIITGRDDSTVGSYGNFFRIVQTPSRGIFNIQWCPTEVCPSCKFECGTVGIVRENGKILLALDGSALPVAFQKE.

Residues Met-1–Ala-24 form the signal peptide. Intrachain disulfides connect Cys-62-Cys-108, Cys-160-Cys-172, and Cys-165-Cys-168.

The protein belongs to the protease inhibitor I3 (leguminous Kunitz-type inhibitor) family. Interacts with SCP1.

Its subcellular location is the secreted. It is found in the extracellular space. It localises to the apoplast. In Medicago truncatula (Barrel medic), this protein is Kunitz type trypsin inhibitor 111 (KPI111).